A 328-amino-acid polypeptide reads, in one-letter code: 3-dehydroquinate synthase (328 aa).

This sequence belongs to the archaeal-type DHQ synthase family.

It catalyses the reaction 2-amino-2,3,7-trideoxy-D-lyxo-hept-6-ulosonate + NAD(+) + H2O = 3-dehydroquinate + NH4(+) + NADH + H(+). Its function is as follows. Catalyzes the oxidative deamination and cyclization of 2-amino-3,7-dideoxy-D-threo-hept-6-ulosonic acid (ADH) to yield 3-dehydroquinate (DHQ), which is fed into the canonical shikimic pathway of aromatic amino acid biosynthesis. This chain is 3-dehydroquinate synthase, found in Methanospirillum hungatei JF-1 (strain ATCC 27890 / DSM 864 / NBRC 100397 / JF-1).